We begin with the raw amino-acid sequence, 151 residues long: Acidic phospholipase A2 1 (151 aa).

The signal sequence occupies residues Met1–Leu27. 7 cysteine pairs are disulfide-bonded: Cys38/Cys104, Cys54/Cys151, Cys56/Cys72, Cys71/Cys132, Cys78/Cys125, Cys88/Cys118, and Cys111/Cys123. Residues Tyr55, Gly57, and Gly59 each contribute to the Ca(2+) site. Residue His75 is part of the active site. Ca(2+) is bound at residue Asp76. Residue Asp126 is part of the active site.

This sequence belongs to the phospholipase A2 family. Group I subfamily. D49 sub-subfamily. Ca(2+) is required as a cofactor. Expressed by the venom gland.

The protein resides in the secreted. It catalyses the reaction a 1,2-diacyl-sn-glycero-3-phosphocholine + H2O = a 1-acyl-sn-glycero-3-phosphocholine + a fatty acid + H(+). Functionally, PLA2 catalyzes the calcium-dependent hydrolysis of the 2-acyl groups in 3-sn-phosphoglycerides. The polypeptide is Acidic phospholipase A2 1 (Tropidechis carinatus (Australian rough-scaled snake)).